The chain runs to 591 residues: L-fucose isomerase (591 aa).

Residues E337 and D361 each act as proton acceptor in the active site. Residues E337, D361, and H528 each contribute to the Mn(2+) site.

Belongs to the L-fucose isomerase family. As to quaternary structure, homohexamer. Mn(2+) serves as cofactor.

The protein resides in the cytoplasm. The enzyme catalyses L-fucose = L-fuculose. The protein operates within carbohydrate degradation; L-fucose degradation; L-lactaldehyde and glycerone phosphate from L-fucose: step 1/3. Its function is as follows. Converts the aldose L-fucose into the corresponding ketose L-fuculose. The sequence is that of L-fucose isomerase from Escherichia coli O6:K15:H31 (strain 536 / UPEC).